The chain runs to 240 residues: Uridylate kinase (240 aa).

K14 to G17 contributes to the ATP binding site. G56 contacts UMP. 2 residues coordinate ATP: G57 and R61. UMP-binding positions include D76 and T137–T144. ATP contacts are provided by T164, Y170, and D173.

The protein belongs to the UMP kinase family. In terms of assembly, homohexamer.

It localises to the cytoplasm. It catalyses the reaction UMP + ATP = UDP + ADP. It participates in pyrimidine metabolism; CTP biosynthesis via de novo pathway; UDP from UMP (UMPK route): step 1/1. With respect to regulation, inhibited by UTP. Catalyzes the reversible phosphorylation of UMP to UDP. This Paracidovorax citrulli (strain AAC00-1) (Acidovorax citrulli) protein is Uridylate kinase.